The primary structure comprises 1562 residues: MPGEAARAELLLPEADRPGPRTDLSCDAAAATTILGGDRREPCALTPGPSHLALTFLPSKPGARPQPEGASWDAGPGGAPSAWADPGEGGPSPMLLPEGLSSQALSTEAPLPATLEPRIVMGEETCQALLSPRAARTALRDQEGGHASPDPPPELCSQGDLSVPSPPPDPDSFFTPPSTPTKTTYALLPACGPHGDARDSEAELRDELLDSPPASPSGSYITADGDSWASSPSCSLSLLAPAEGLDFPSGWGLSPQGSMVDERELHPAGTPEPPSSESSLSADSSSSWGQEGHFFDLDFLANDPMIPAALLPFQGSLIFQVEAVEVTPLSPEEEEEEAVADPDPGGDLAGEGEEDSTSASFLQSLSDLSITEGMDEAFAFRDDTSAASSDSDSASYAEADDERLYSGEPHAQATLLQDSVQKTEEESGGGAKGLQAQDGTVSWAVEAAPQTSDRGAYLSQRQELISEVTEEGLALGQESTATVTPHTLQVAPGLQVEVATRVTPQAGEEETDSTAGQESAAMAMPQPSQEGISEILGQESVTAEKLPTPQEETSLTLCPDSPQNLKEEGGLDLPSGRKPVAAATIVPRQAKEDLTLPQDSAMTPPLPLQDTDLSSAPKPVAAATIVSQQAEEGLTLPQDSVMTPPLPLQDTELSSAPKPVAAATLVSQQAEEGLTLPQDSAMTPPLPLQDTDLSSAPKPVAAATLVSQQAEEGLTLPQDSAMTPPLPLQDTDLSSAPKPVAAATLVSQQAEEGLTLPQDSAMTPPLPLQDTDLSSAPKPVAAATIVSQQAEEGLTLPQDSAMTPPLPLQDTDLSSAPKPVAAATIVSQQAEEGLTLPQDSAMTPPLPLQDTDLSSAPKPVAAATPVSQQAEEGLTLPQDSAMTPPLPLQDTDLSSAPKPVAAATPVSQQAEEGLTLPQDSAMTAPLPLQDTGPTSGPEPLAVATPQTLQAEAGCAPGTEPVATMAQQEVGEALGPRPAPEEKNAALPTVPEPAALDQVQQDDPQPAAEAGTPWAAQEDADSTLGMEALSLPEPASGAGEEIAEALSRPGREACLEARAHTGDGAKPDSPQKETLEVENQQEGGLKPLAQEHGPRSALGGAREVPDAPPAACPEVSQARLLSPAREERGLSGKSTPEPTLPSAVATEASLDSCPESSVGAVSSLDRGCPDAPAPTSAPTSQQPEPVLGLGSVEQPHEVPSVLGTPLLQPPENLAKGQPSTPVDRPLGPDPSAPGTLAGAALPPLEPPAPCLCQDPQEDSVEDEEPPGSLGLPPPQAGVQPAAAAVSGTTQPLGTGPRVSLSPHSPLLSPKVASMDAKDLALQILPPCQVPPPSGPQSPAGPQGLSAPEQQEDEDSLEEDSPRALGSGQHSDSHGESSAELDEQDILAPQTVQCPAQAPAGGSEETIAKAKQSRSEKKARKAMSKLGLRQIQGVTRITIQKSKNILFVIAKPDVFKSPASDTYVVFGEAKIEDLSQQVHKAAAEKFKVPSEPSALVPESAPRPRVRLECKEEEEEEEEEVDEAGLELRDIELVMAQANVSRAKAVRALRDNHSDIVNAIMELTM.

The span at M1–P13 shows a compositional bias: low complexity. Disordered stretches follow at residues M1 to L24, F56 to P110, S131 to D226, S249 to W288, T327 to L365, R381 to L458, T503 to A941, and G953 to K1423. The segment covering G195 to L208 has biased composition (basic and acidic residues). Residues S275–S287 show a composition bias toward low complexity. A compositionally biased stretch (acidic residues) spans P331–A340. Over residues S385–A397 the composition is skewed to low complexity. Polar residues-rich tracts occupy residues P449–L458 and Q550–N564. The segment covering P992–A1007 has biased composition (low complexity). Residues P1048–L1074 are compositionally biased toward basic and acidic residues. A Phosphoserine modification is found at S1068. 2 stretches are compositionally biased toward low complexity: residues A1172–P1182 and A1231–P1241. Residues P1254–P1264 are compositionally biased toward acidic residues. Low complexity-rich tracts occupy residues P1265–V1284, S1298–P1308, and Q1335–S1344. The span at Q1348–E1357 shows a compositional bias: acidic residues. S1354 is subject to Phosphoserine. In terms of domain architecture, NAC-A/B spans S1411–V1476.

It belongs to the NAC-alpha family.

It localises to the cytoplasm. It is found in the nucleus. Its function is as follows. May prevent inappropriate targeting of non-secretory polypeptides to the endoplasmic reticulum (ER). May bind to nascent polypeptide chains as they emerge from the ribosome and block their interaction with the signal recognition particle (SRP), which normally targets nascent secretory peptides to the ER. May also reduce the inherent affinity of ribosomes for protein translocation sites in the ER membrane (M sites). The chain is NAC-alpha domain-containing protein 1 (NACAD) from Homo sapiens (Human).